The primary structure comprises 251 residues: GTP cyclohydrolase 1 type 2 homolog (251 aa).

A divalent metal cation-binding residues include histidine 64, histidine 65, aspartate 102, histidine 219, and glutamate 223.

It belongs to the GTP cyclohydrolase I type 2/NIF3 family. In terms of assembly, homohexamer.

The chain is GTP cyclohydrolase 1 type 2 homolog from Chlamydia trachomatis serovar D (strain ATCC VR-885 / DSM 19411 / UW-3/Cx).